The following is a 360-amino-acid chain: Phosphoserine aminotransferase (360 aa).

L-glutamate is bound at residue arginine 43. Residues alanine 77–serine 78, tryptophan 103, threonine 152, aspartate 172, and glutamine 195 contribute to the pyridoxal 5'-phosphate site. N6-(pyridoxal phosphate)lysine is present on lysine 196. Asparagine 237–threonine 238 is a binding site for pyridoxal 5'-phosphate.

This sequence belongs to the class-V pyridoxal-phosphate-dependent aminotransferase family. SerC subfamily. Homodimer. Pyridoxal 5'-phosphate is required as a cofactor.

The protein resides in the cytoplasm. The enzyme catalyses O-phospho-L-serine + 2-oxoglutarate = 3-phosphooxypyruvate + L-glutamate. It carries out the reaction 4-(phosphooxy)-L-threonine + 2-oxoglutarate = (R)-3-hydroxy-2-oxo-4-phosphooxybutanoate + L-glutamate. It functions in the pathway amino-acid biosynthesis; L-serine biosynthesis; L-serine from 3-phospho-D-glycerate: step 2/3. The protein operates within cofactor biosynthesis; pyridoxine 5'-phosphate biosynthesis; pyridoxine 5'-phosphate from D-erythrose 4-phosphate: step 3/5. Functionally, catalyzes the reversible conversion of 3-phosphohydroxypyruvate to phosphoserine and of 3-hydroxy-2-oxo-4-phosphonooxybutanoate to phosphohydroxythreonine. The sequence is that of Phosphoserine aminotransferase from Syntrophobacter fumaroxidans (strain DSM 10017 / MPOB).